The primary structure comprises 619 residues: Chaperone protein HscA homolog (619 aa).

Belongs to the heat shock protein 70 family.

Functionally, chaperone involved in the maturation of iron-sulfur cluster-containing proteins. Has a low intrinsic ATPase activity which is markedly stimulated by HscB. In Haemophilus influenzae (strain PittEE), this protein is Chaperone protein HscA homolog.